The chain runs to 323 residues: tRNA dimethylallyltransferase (323 aa).

16–23 (GPTASGKT) serves as a coordination point for ATP. 18 to 23 (TASGKT) contributes to the substrate binding site. Interaction with substrate tRNA regions lie at residues 41-44 (DSAL), 165-169 (QRIQR), 253-258 (RCVGYR), and 286-293 (KRQITWLR).

Belongs to the IPP transferase family. In terms of assembly, monomer. Mg(2+) serves as cofactor.

The enzyme catalyses adenosine(37) in tRNA + dimethylallyl diphosphate = N(6)-dimethylallyladenosine(37) in tRNA + diphosphate. Its function is as follows. Catalyzes the transfer of a dimethylallyl group onto the adenine at position 37 in tRNAs that read codons beginning with uridine, leading to the formation of N6-(dimethylallyl)adenosine (i(6)A). This is tRNA dimethylallyltransferase from Ralstonia nicotianae (strain ATCC BAA-1114 / GMI1000) (Ralstonia solanacearum).